The chain runs to 37 residues: Protein YhiY (37 aa).

This is Protein YhiY from Escherichia coli (strain K12).